We begin with the raw amino-acid sequence, 466 residues long: Ribulose bisphosphate carboxylase large chain (466 aa).

Lys5 carries the post-translational modification N6,N6,N6-trimethyllysine. Residues Asn114 and Thr164 each contribute to the substrate site. The active-site Proton acceptor is Lys166. Residue Lys168 coordinates substrate. Mg(2+)-binding residues include Lys192, Asp194, and Glu195. The residue at position 192 (Lys192) is an N6-carboxylysine. His285 acts as the Proton acceptor in catalysis. Substrate is bound by residues Arg286, His318, and Ser370.

It belongs to the RuBisCO large chain family. Type I subfamily. As to quaternary structure, heterohexadecamer of 8 large chains and 8 small chains; disulfide-linked. The disulfide link is formed within the large subunit homodimers. It depends on Mg(2+) as a cofactor. In terms of processing, the disulfide bond which can form in the large chain dimeric partners within the hexadecamer appears to be associated with oxidative stress and protein turnover.

It is found in the plastid. Its subcellular location is the chloroplast. It catalyses the reaction 2 (2R)-3-phosphoglycerate + 2 H(+) = D-ribulose 1,5-bisphosphate + CO2 + H2O. It carries out the reaction D-ribulose 1,5-bisphosphate + O2 = 2-phosphoglycolate + (2R)-3-phosphoglycerate + 2 H(+). RuBisCO catalyzes two reactions: the carboxylation of D-ribulose 1,5-bisphosphate, the primary event in carbon dioxide fixation, as well as the oxidative fragmentation of the pentose substrate in the photorespiration process. Both reactions occur simultaneously and in competition at the same active site. This Adoxa moschatellina (Moschatel) protein is Ribulose bisphosphate carboxylase large chain.